Consider the following 102-residue polypeptide: Small ribosomal subunit protein uS10 (102 aa).

The protein belongs to the universal ribosomal protein uS10 family. In terms of assembly, part of the 30S ribosomal subunit.

In terms of biological role, involved in the binding of tRNA to the ribosomes. The chain is Small ribosomal subunit protein uS10 from Methanobrevibacter smithii (strain ATCC 35061 / DSM 861 / OCM 144 / PS).